The sequence spans 428 residues: Serine--tRNA ligase (428 aa).

Thr-231–Glu-233 lines the L-serine pocket. Residues Arg-262–Glu-264 and Val-278 each bind ATP. Glu-285 lines the L-serine pocket. Residue Glu-349–Ser-352 coordinates ATP. Thr-384 contributes to the L-serine binding site.

It belongs to the class-II aminoacyl-tRNA synthetase family. Type-1 seryl-tRNA synthetase subfamily. In terms of assembly, homodimer. The tRNA molecule binds across the dimer.

The protein localises to the cytoplasm. It carries out the reaction tRNA(Ser) + L-serine + ATP = L-seryl-tRNA(Ser) + AMP + diphosphate + H(+). The enzyme catalyses tRNA(Sec) + L-serine + ATP = L-seryl-tRNA(Sec) + AMP + diphosphate + H(+). The protein operates within aminoacyl-tRNA biosynthesis; selenocysteinyl-tRNA(Sec) biosynthesis; L-seryl-tRNA(Sec) from L-serine and tRNA(Sec): step 1/1. In terms of biological role, catalyzes the attachment of serine to tRNA(Ser). Is also able to aminoacylate tRNA(Sec) with serine, to form the misacylated tRNA L-seryl-tRNA(Sec), which will be further converted into selenocysteinyl-tRNA(Sec). This chain is Serine--tRNA ligase, found in Bifidobacterium adolescentis (strain ATCC 15703 / DSM 20083 / NCTC 11814 / E194a).